Here is a 137-residue protein sequence, read N- to C-terminus: Large ribosomal subunit protein uL16 (137 aa).

The protein belongs to the universal ribosomal protein uL16 family. As to quaternary structure, part of the 50S ribosomal subunit.

Functionally, binds 23S rRNA and is also seen to make contacts with the A and possibly P site tRNAs. This is Large ribosomal subunit protein uL16 from Sinorhizobium medicae (strain WSM419) (Ensifer medicae).